The sequence spans 155 residues: Endoribonuclease YbeY (155 aa).

The Zn(2+) site is built by His114, His118, and His124.

Belongs to the endoribonuclease YbeY family. Zn(2+) is required as a cofactor.

It localises to the cytoplasm. Single strand-specific metallo-endoribonuclease involved in late-stage 70S ribosome quality control and in maturation of the 3' terminus of the 16S rRNA. The sequence is that of Endoribonuclease YbeY from Escherichia coli O6:K15:H31 (strain 536 / UPEC).